Consider the following 196-residue polypeptide: Probable malonic semialdehyde reductase RutE (196 aa).

This sequence belongs to the nitroreductase family. HadB/RutE subfamily. It depends on FMN as a cofactor.

It catalyses the reaction 3-hydroxypropanoate + NADP(+) = 3-oxopropanoate + NADPH + H(+). Functionally, may reduce toxic product malonic semialdehyde to 3-hydroxypropionic acid, which is excreted. This chain is Probable malonic semialdehyde reductase RutE, found in Escherichia coli O8 (strain IAI1).